Consider the following 226-residue polypeptide: Ribonuclease 3 (226 aa).

The region spanning 7 to 129 (DARLQQALGY…LFGAVFLDAG (123 aa)) is the RNase III domain. Mg(2+) is bound at residue Glu-42. The active site involves Asp-46. Mg(2+)-binding residues include Asp-115 and Glu-118. Glu-118 is a catalytic residue. One can recognise a DRBM domain in the interval 156 to 226 (DPKTRLQEIL…ARQACAELQR (71 aa)).

Belongs to the ribonuclease III family. Homodimer. Requires Mg(2+) as cofactor.

Its subcellular location is the cytoplasm. It catalyses the reaction Endonucleolytic cleavage to 5'-phosphomonoester.. In terms of biological role, digests double-stranded RNA. Involved in the processing of primary rRNA transcript to yield the immediate precursors to the large and small rRNAs (23S and 16S). Processes some mRNAs, and tRNAs when they are encoded in the rRNA operon. Processes pre-crRNA and tracrRNA of type II CRISPR loci if present in the organism. The sequence is that of Ribonuclease 3 from Thiobacillus denitrificans (strain ATCC 25259 / T1).